A 173-amino-acid polypeptide reads, in one-letter code: Peptidyl-prolyl cis-trans isomerase cyp3 (173 aa).

Residues 8 to 172 (FMDIAIDGRL…SNVAIVECGE (165 aa)) enclose the PPIase cyclophilin-type domain.

Belongs to the cyclophilin-type PPIase family. PPIase H subfamily.

It localises to the cytoplasm. Its subcellular location is the cytoskeleton. It is found in the microtubule organizing center. The protein localises to the spindle pole body. It catalyses the reaction [protein]-peptidylproline (omega=180) = [protein]-peptidylproline (omega=0). PPIases accelerate the folding of proteins. It catalyzes the cis-trans isomerization of proline imidic peptide bonds in oligopeptides. This chain is Peptidyl-prolyl cis-trans isomerase cyp3 (cyp3), found in Schizosaccharomyces pombe (strain 972 / ATCC 24843) (Fission yeast).